The sequence spans 730 residues: Synaptotagmin-like protein 5 (730 aa).

One can recognise a RabBD domain in the interval 7 to 123 (FINLSFLLDH…IITGEWFFEE (117 aa)). The segment at 64–106 (CVHCHRNLGLIFDRGDPCQACSLRVCRECRVAGPNGSWKCTVC) adopts an FYVE-type zinc-finger fold. Position 147 is a phosphoserine (Ser-147). Disordered stretches follow at residues 147–188 (SPGA…GFLL), 217–271 (QHFR…TRTV), and 294–355 (SQEL…LDKD). 2 stretches are compositionally biased toward polar residues: residues 248 to 271 (PKSSRSNGVTPGTQSSPAPSTRTV) and 305 to 322 (TSGTPSIAVSGTSLSSDQ). C2 domains are found at residues 406–527 (VSGE…DEWF) and 563–694 (PPEQ…VDWM).

Binds RAB27A that has been activated by GTP-binding, and possibly also RAB3A and RAB6A. Highly expressed in placenta and liver.

The protein localises to the membrane. May act as Rab effector protein and play a role in vesicle trafficking. Binds phospholipids. The protein is Synaptotagmin-like protein 5 (SYTL5) of Homo sapiens (Human).